The primary structure comprises 542 residues: CTP synthase (542 aa).

An amidoligase domain region spans residues 1-265 (MTRYIFVTGG…DDFVVERFGL (265 aa)). CTP is bound at residue Ser13. Position 13 (Ser13) interacts with UTP. ATP contacts are provided by residues 14–19 (SLGKGI) and Asp71. Mg(2+) is bound by residues Asp71 and Glu139. CTP is bound by residues 146 to 148 (DIE), 186 to 191 (KTKPTQ), and Lys222. Residues 186-191 (KTKPTQ) and Lys222 each bind UTP. The Glutamine amidotransferase type-1 domain maps to 290 to 541 (TIAMVGKYME…VKAALAQKNK (252 aa)). Residue Gly351 participates in L-glutamine binding. Residue Cys378 is the Nucleophile; for glutamine hydrolysis of the active site. L-glutamine is bound by residues 379–382 (LGMQ), Glu402, and Arg469. Catalysis depends on residues His514 and Glu516.

This sequence belongs to the CTP synthase family. Homotetramer.

It catalyses the reaction UTP + L-glutamine + ATP + H2O = CTP + L-glutamate + ADP + phosphate + 2 H(+). The enzyme catalyses L-glutamine + H2O = L-glutamate + NH4(+). It carries out the reaction UTP + NH4(+) + ATP = CTP + ADP + phosphate + 2 H(+). It functions in the pathway pyrimidine metabolism; CTP biosynthesis via de novo pathway; CTP from UDP: step 2/2. Its activity is regulated as follows. Allosterically activated by GTP, when glutamine is the substrate; GTP has no effect on the reaction when ammonia is the substrate. The allosteric effector GTP functions by stabilizing the protein conformation that binds the tetrahedral intermediate(s) formed during glutamine hydrolysis. Inhibited by the product CTP, via allosteric rather than competitive inhibition. Catalyzes the ATP-dependent amination of UTP to CTP with either L-glutamine or ammonia as the source of nitrogen. Regulates intracellular CTP levels through interactions with the four ribonucleotide triphosphates. The polypeptide is CTP synthase (Pseudomonas putida (strain ATCC 700007 / DSM 6899 / JCM 31910 / BCRC 17059 / LMG 24140 / F1)).